A 294-amino-acid polypeptide reads, in one-letter code: uncharacterized protein (294 aa).

A helical transmembrane segment spans residues 5–25; the sequence is ILIILIIIIIVIISLIYLKNF. 4 N-linked (GlcNAc...) asparagine; by host glycosylation sites follow: asparagine 151, asparagine 170, asparagine 205, and asparagine 271.

It localises to the membrane. This is an uncharacterized protein from Acanthamoeba polyphaga (Amoeba).